The chain runs to 351 residues: Photosystem II D2 protein (351 aa).

A helical membrane pass occupies residues 39 to 59; that stretch reads TAYLAIGGWLTGTTFVTSWYT. A chlorophyll a-binding site is contributed by H116. A helical membrane pass occupies residues 123-139; the sequence is GFMLRQFEIARLVGIRP. Q128 and N141 together coordinate pheophytin a. The helical transmembrane segment at 151 to 164 threads the bilayer; the sequence is VFVSVFLMYPLGQS. Position 196 (H196) interacts with chlorophyll a. The chain crosses the membrane as a helical span at residues 206–226; the sequence is GALLCAIHGATVENTLFEDGE. Positions 213 and 260 each coordinate a plastoquinone. H213 serves as a coordination point for Fe cation. Fe cation is bound at residue H267. The helical transmembrane segment at 277–293 threads the bilayer; sequence GLWTSSIGIIGLALNLR.

Belongs to the reaction center PufL/M/PsbA/D family. PSII is composed of 1 copy each of membrane proteins PsbA, PsbB, PsbC, PsbD, PsbE, PsbF, PsbH, PsbI, PsbJ, PsbK, PsbL, PsbM, PsbT, PsbX, PsbY, PsbZ, Psb30/Ycf12, peripheral proteins PsbO, CyanoQ (PsbQ), PsbU, PsbV and a large number of cofactors. It forms dimeric complexes. It depends on The D1/D2 heterodimer binds P680, chlorophylls that are the primary electron donor of PSII, and subsequent electron acceptors. It shares a non-heme iron and each subunit binds pheophytin, quinone, additional chlorophylls, carotenoids and lipids. There is also a Cl(-1) ion associated with D1 and D2, which is required for oxygen evolution. The PSII complex binds additional chlorophylls, carotenoids and specific lipids. as a cofactor.

The protein localises to the cellular thylakoid membrane. It catalyses the reaction 2 a plastoquinone + 4 hnu + 2 H2O = 2 a plastoquinol + O2. Functionally, photosystem II (PSII) is a light-driven water:plastoquinone oxidoreductase that uses light energy to abstract electrons from H(2)O, generating O(2) and a proton gradient subsequently used for ATP formation. It consists of a core antenna complex that captures photons, and an electron transfer chain that converts photonic excitation into a charge separation. The D1/D2 (PsbA/PsbD) reaction center heterodimer binds P680, the primary electron donor of PSII as well as several subsequent electron acceptors. D2 is needed for assembly of a stable PSII complex. The chain is Photosystem II D2 protein from Parasynechococcus marenigrum (strain WH8102).